We begin with the raw amino-acid sequence, 291 residues long: MIPIQLTVFFMIIYVLESLTIIVQSSLIVAVLGREWLQVRRLMPVDMILISLGISRFCLQWASMLNNFCSYFNLNYVLCNLTITWEFFNILTFWLNSLLTVFYCIKASSFTHHIFLWLRWRILRLFPWILLGSLMITCVTIIPSAIGNYIQIQLLTMEHLPRNSTVTDKLEKFHQYQFQAHTVALVIPFILFLASTILLMASLTKQIQHHSTGHCNPSMKAHFTALRSLAVLFIVFTSYFLTILITIIGTLFDKRCWLWVWEAFVYAFILMHSTSLMLSSPTLKRILKGKC.

Methionine 1 is a topological domain (extracellular). The helical transmembrane segment at isoleucine 2–isoleucine 22 threads the bilayer. The Cytoplasmic segment spans residues valine 23–arginine 41. A helical transmembrane segment spans residues leucine 42–alanine 62. Topologically, residues serine 63–threonine 84 are extracellular. Asparagine 80 is a glycosylation site (N-linked (GlcNAc...) asparagine). The helical transmembrane segment at tryptophan 85 to isoleucine 105 threads the bilayer. Residues lysine 106–leucine 125 are Cytoplasmic-facing. A helical transmembrane segment spans residues phenylalanine 126 to isoleucine 146. The Extracellular portion of the chain corresponds to glycine 147–threonine 182. Residue asparagine 163 is glycosylated (N-linked (GlcNAc...) asparagine). A helical transmembrane segment spans residues valine 183–leucine 203. The Cytoplasmic segment spans residues threonine 204–serine 228. The chain crosses the membrane as a helical span at residues leucine 229 to glycine 249. The Extracellular segment spans residues threonine 250–tryptophan 257. A helical membrane pass occupies residues leucine 258–leucine 278. The Cytoplasmic segment spans residues serine 279 to cysteine 291.

Belongs to the G-protein coupled receptor T2R family. In terms of assembly, interacts with RTP3 and RTP4.

Its subcellular location is the cell membrane. In terms of biological role, receptor that may play a role in the perception of bitterness and is gustducin-linked. May play a role in sensing the chemical composition of the gastrointestinal content. The activity of this receptor may stimulate alpha gustducin, mediate PLC-beta-2 activation and lead to the gating of TRPM5. This chain is Taste receptor type 2 member 16 (TAS2R16), found in Pan paniscus (Pygmy chimpanzee).